The following is a 484-amino-acid chain: Zinc metalloproteinase-disintegrin stejnitin (484 aa).

The N-terminal stretch at 1 to 20 (MIQVLLVTICLAVFPYQGNS) is a signal peptide. Residues 21–192 (IILESGNVND…ASQLNLTPDE (172 aa)) constitute a propeptide that is removed on maturation. Gln-193 is subject to Pyrrolidone carboxylic acid. The Peptidase M12B domain occupies 194 to 392 (RFIELVIVAD…YTSRCLYNGP (199 aa)). Glu-197 contacts Ca(2+). The N-linked (GlcNAc...) asparagine glycan is linked to Asn-254. Asp-281 is a Ca(2+) binding site. 3 disulfides stabilise this stretch: Cys-305-Cys-387, Cys-345-Cys-369, and Cys-347-Cys-352. 3 residues coordinate Zn(2+): His-330, His-334, and His-340. Ca(2+) is bound by residues Cys-387, Asn-390, Val-402, Asn-405, Glu-409, Glu-412, and Asp-415. One can recognise a Disintegrin domain in the interval 400–484 (PPVCGNYYVE…GDCPRNPFRA (85 aa)). Disulfide bonds link Cys-403–Cys-422, Cys-414–Cys-432, Cys-416–Cys-427, Cys-426–Cys-449, Cys-440–Cys-446, Cys-445–Cys-470, and Cys-458–Cys-477. A Cell attachment site motif is present at residues 462-464 (KGD).

Belongs to the venom metalloproteinase (M12B) family. P-II subfamily. P-IIb sub-subfamily. Zn(2+) serves as cofactor. Post-translationally, the N-terminus is blocked. In terms of tissue distribution, expressed by the venom gland.

It is found in the secreted. In terms of biological role, snake venom zinc metalloproteinase that inhibits ADP-induced platelet aggregation in human platelet-rich plasma (IC(50) is 175 nM) and cleaves alpha-(FGA) and subsequently the beta-chain (FGG) of bovine fibrinogen, leaving the gamma-chain unaffected. It is also able to inhibit proliferatin of ECV304 cells by inducing apoptosis of these cells. This is Zinc metalloproteinase-disintegrin stejnitin from Trimeresurus stejnegeri (Chinese green tree viper).